Here is a 130-residue protein sequence, read N- to C-terminus: D-ribose pyranase (130 aa).

The active-site Proton donor is the H20. Residues D28, H97, and Y119 to N121 contribute to the substrate site.

This sequence belongs to the RbsD / FucU family. RbsD subfamily. Homodecamer.

The protein resides in the cytoplasm. It catalyses the reaction beta-D-ribopyranose = beta-D-ribofuranose. Its pathway is carbohydrate metabolism; D-ribose degradation; D-ribose 5-phosphate from beta-D-ribopyranose: step 1/2. Functionally, catalyzes the interconversion of beta-pyran and beta-furan forms of D-ribose. The polypeptide is D-ribose pyranase (Thermoanaerobacter pseudethanolicus (strain ATCC 33223 / 39E) (Clostridium thermohydrosulfuricum)).